Reading from the N-terminus, the 226-residue chain is ATP-dependent dethiobiotin synthetase BioD (226 aa).

14-19 lines the ATP pocket; the sequence is GIGKTF. Thr-18 provides a ligand contact to Mg(2+). The active site involves Lys-39. Residue Ser-43 coordinates substrate. ATP contacts are provided by residues Asp-56, 117–120, 177–178, 206–208, and Asn-213; these read EGVG, NT, and PHI. Mg(2+) is bound by residues Asp-56 and Glu-117.

The protein belongs to the dethiobiotin synthetase family. In terms of assembly, homodimer. Mg(2+) is required as a cofactor.

It localises to the cytoplasm. It catalyses the reaction (7R,8S)-7,8-diammoniononanoate + CO2 + ATP = (4R,5S)-dethiobiotin + ADP + phosphate + 3 H(+). The protein operates within cofactor biosynthesis; biotin biosynthesis; biotin from 7,8-diaminononanoate: step 1/2. Functionally, catalyzes a mechanistically unusual reaction, the ATP-dependent insertion of CO2 between the N7 and N8 nitrogen atoms of 7,8-diaminopelargonic acid (DAPA, also called 7,8-diammoniononanoate) to form a ureido ring. This Xylella fastidiosa (strain Temecula1 / ATCC 700964) protein is ATP-dependent dethiobiotin synthetase BioD.